A 290-amino-acid polypeptide reads, in one-letter code: Acetylglutamate kinase (290 aa).

Residues 64–65 (GG), R86, and N183 contribute to the substrate site.

Belongs to the acetylglutamate kinase family. ArgB subfamily.

It is found in the cytoplasm. It carries out the reaction N-acetyl-L-glutamate + ATP = N-acetyl-L-glutamyl 5-phosphate + ADP. The protein operates within amino-acid biosynthesis; L-arginine biosynthesis; N(2)-acetyl-L-ornithine from L-glutamate: step 2/4. Its function is as follows. Catalyzes the ATP-dependent phosphorylation of N-acetyl-L-glutamate. In Halothermothrix orenii (strain H 168 / OCM 544 / DSM 9562), this protein is Acetylglutamate kinase.